A 359-amino-acid chain; its full sequence is 4-hydroxy-3-methylbut-2-en-1-yl diphosphate synthase (flavodoxin) (359 aa).

Residues Cys-264, Cys-267, Cys-299, and Glu-306 each coordinate [4Fe-4S] cluster.

Belongs to the IspG family. [4Fe-4S] cluster serves as cofactor.

The catalysed reaction is (2E)-4-hydroxy-3-methylbut-2-enyl diphosphate + oxidized [flavodoxin] + H2O + 2 H(+) = 2-C-methyl-D-erythritol 2,4-cyclic diphosphate + reduced [flavodoxin]. It functions in the pathway isoprenoid biosynthesis; isopentenyl diphosphate biosynthesis via DXP pathway; isopentenyl diphosphate from 1-deoxy-D-xylulose 5-phosphate: step 5/6. Converts 2C-methyl-D-erythritol 2,4-cyclodiphosphate (ME-2,4cPP) into 1-hydroxy-2-methyl-2-(E)-butenyl 4-diphosphate. The sequence is that of 4-hydroxy-3-methylbut-2-en-1-yl diphosphate synthase (flavodoxin) from Helicobacter pylori (strain ATCC 700392 / 26695) (Campylobacter pylori).